The following is a 188-amino-acid chain: ATP synthase subunit b, chloroplastic (188 aa).

A helical membrane pass occupies residues 35–57 (LINLAVVIGVLVYFGKGVLTTLL).

This sequence belongs to the ATPase B chain family. F-type ATPases have 2 components, F(1) - the catalytic core - and F(0) - the membrane proton channel. F(1) has five subunits: alpha(3), beta(3), gamma(1), delta(1), epsilon(1). F(0) has four main subunits: a(1), b(1), b'(1) and c(10-14). The alpha and beta chains form an alternating ring which encloses part of the gamma chain. F(1) is attached to F(0) by a central stalk formed by the gamma and epsilon chains, while a peripheral stalk is formed by the delta, b and b' chains.

It localises to the plastid. The protein resides in the chloroplast thylakoid membrane. F(1)F(0) ATP synthase produces ATP from ADP in the presence of a proton or sodium gradient. F-type ATPases consist of two structural domains, F(1) containing the extramembraneous catalytic core and F(0) containing the membrane proton channel, linked together by a central stalk and a peripheral stalk. During catalysis, ATP synthesis in the catalytic domain of F(1) is coupled via a rotary mechanism of the central stalk subunits to proton translocation. Functionally, component of the F(0) channel, it forms part of the peripheral stalk, linking F(1) to F(0). This chain is ATP synthase subunit b, chloroplastic, found in Zygnema circumcarinatum (Green alga).